The sequence spans 175 residues: Deoxyuridine 5'-triphosphate nucleotidohydrolase (175 aa).

Substrate is bound by residues 67-69, asparagine 80, 84-86, and lysine 94; these read RSG and TVD. Residues 138-175 form a disordered region; the sequence is RAEGGFGSTGGHAAVGADTNGQQGGNRYASVVSDRKGQ.

The protein belongs to the dUTPase family. Mg(2+) serves as cofactor.

It catalyses the reaction dUTP + H2O = dUMP + diphosphate + H(+). Its pathway is pyrimidine metabolism; dUMP biosynthesis; dUMP from dCTP (dUTP route): step 2/2. In terms of biological role, this enzyme is involved in nucleotide metabolism: it produces dUMP, the immediate precursor of thymidine nucleotides and it decreases the intracellular concentration of dUTP so that uracil cannot be incorporated into DNA. This is Deoxyuridine 5'-triphosphate nucleotidohydrolase from Streptomyces avermitilis (strain ATCC 31267 / DSM 46492 / JCM 5070 / NBRC 14893 / NCIMB 12804 / NRRL 8165 / MA-4680).